The primary structure comprises 725 residues: Homeobox-leucine zipper protein HDG3 (725 aa).

A disordered region spans residues 1–74 (MSQSNMVPVA…PRHKKKKYNR (74 aa)). Residues 11 to 40 (NNGDNNNDNENNNNNNNNGGTDNTNAGNDS) are compositionally biased toward low complexity. Positions 46-64 (DSGNTSSGNHGEGLGNNQA) are enriched in polar residues. The span at 65–74 (PRHKKKKYNR) shows a compositional bias: basic residues. A DNA-binding region (homeobox) is located at residues 68–127 (KKKKYNRHTQLQISEMEAFFRECPHPDDKQRYDLSAQLGLDPVQIKFWFQNKRTQNKNQQ). Positions 117-201 (QNKRTQNKNQ…SVTAEKISRL (85 aa)) form a coiled coil. An START domain is found at 243 to 475 (DANTKPIIME…LVRQCERISS (233 aa)).

Belongs to the HD-ZIP homeobox family. Class IV subfamily. As to quaternary structure, interacts with AIL7/PLT7, ANT, BBM and AIL1. As to expression, expressed in siliques.

Its subcellular location is the nucleus. Probable transcription factor. Seems to promote cell differentiation. The chain is Homeobox-leucine zipper protein HDG3 from Arabidopsis thaliana (Mouse-ear cress).